Here is a 319-residue protein sequence, read N- to C-terminus: Formimidoylglutamase (319 aa).

Mn(2+)-binding residues include histidine 131, aspartate 154, histidine 156, aspartate 158, cysteine 248, and aspartate 250.

This sequence belongs to the arginase family. Requires Mn(2+) as cofactor.

It carries out the reaction N-formimidoyl-L-glutamate + H2O = formamide + L-glutamate. It participates in amino-acid degradation; L-histidine degradation into L-glutamate; L-glutamate from N-formimidoyl-L-glutamate (hydrolase route): step 1/1. Catalyzes the conversion of N-formimidoyl-L-glutamate to L-glutamate and formamide. This chain is Formimidoylglutamase, found in Legionella pneumophila subsp. pneumophila (strain Philadelphia 1 / ATCC 33152 / DSM 7513).